A 203-amino-acid chain; its full sequence is NADH-quinone oxidoreductase subunit C (203 aa).

The protein belongs to the complex I 30 kDa subunit family. NDH-1 is composed of 14 different subunits. Subunits NuoB, C, D, E, F, and G constitute the peripheral sector of the complex.

It is found in the cell inner membrane. The catalysed reaction is a quinone + NADH + 5 H(+)(in) = a quinol + NAD(+) + 4 H(+)(out). Functionally, NDH-1 shuttles electrons from NADH, via FMN and iron-sulfur (Fe-S) centers, to quinones in the respiratory chain. The immediate electron acceptor for the enzyme in this species is believed to be ubiquinone. Couples the redox reaction to proton translocation (for every two electrons transferred, four hydrogen ions are translocated across the cytoplasmic membrane), and thus conserves the redox energy in a proton gradient. The chain is NADH-quinone oxidoreductase subunit C from Verminephrobacter eiseniae (strain EF01-2).